We begin with the raw amino-acid sequence, 680 residues long: DNA-directed RNA polymerase subunit beta' (680 aa).

Positions 69, 71, 87, and 90 each coordinate Zn(2+). Mg(2+) is bound by residues aspartate 489, aspartate 491, and aspartate 493.

It belongs to the RNA polymerase beta' chain family. RpoC1 subfamily. In plastids the minimal PEP RNA polymerase catalytic core is composed of four subunits: alpha, beta, beta', and beta''. When a (nuclear-encoded) sigma factor is associated with the core the holoenzyme is formed, which can initiate transcription. It depends on Mg(2+) as a cofactor. Zn(2+) serves as cofactor.

Its subcellular location is the plastid. It is found in the chloroplast. The catalysed reaction is RNA(n) + a ribonucleoside 5'-triphosphate = RNA(n+1) + diphosphate. In terms of biological role, DNA-dependent RNA polymerase catalyzes the transcription of DNA into RNA using the four ribonucleoside triphosphates as substrates. This is DNA-directed RNA polymerase subunit beta' from Lepidium virginicum (Virginia pepperweed).